The primary structure comprises 350 residues: Glycolate oxidase subunit GlcE (350 aa).

The FAD-binding PCMH-type domain maps to 1–173 (MLRECDYSQA…TEISMKVLPR (173 aa)).

In terms of assembly, the glycolate oxidase likely consists of three subunits, GlcD, GlcE and GlcF. The cofactor is FAD.

The protein resides in the cell inner membrane. It carries out the reaction glycolate + A = glyoxylate + AH2. The catalysed reaction is (R)-lactate + A = pyruvate + AH2. With respect to regulation, in vitro the glycolate oxidase activity is inhibited by the sulfhydryl inhibitors CuSO4 and PCMB, by KCN, but not by the metal complexing agent EDTA. Component of a complex that catalyzes the oxidation of glycolate to glyoxylate. Is required for E.coli to grow on glycolate as a sole source of carbon. Is also able to oxidize D-lactate ((R)-lactate) with a similar rate. Does not link directly to O(2), and 2,6-dichloroindophenol (DCIP) and phenazine methosulfate (PMS) can act as artificial electron acceptors in vitro, but the physiological molecule that functions as a primary electron acceptor during glycolate oxidation is unknown. The polypeptide is Glycolate oxidase subunit GlcE (Escherichia coli (strain K12)).